Reading from the N-terminus, the 327-residue chain is Mitochondrial substrate carrier family protein A (327 aa).

A disordered region spans residues 1–36; that stretch reads MVINNQNNNNQNNNQNNNNKNDNLNNSTTTTTTTAT. At 1-48 the chain is on the mitochondrial intermembrane side; it reads MVINNQNNNNQNNNQNNNNKNDNLNNSTTTTTTTATTTKSSTLFHSND. Solcar repeat units follow at residues 43–132, 140–224, and 233–323; these read LFHS…FKRM, ISVI…IKEK, and PPLY…AITL. The chain crosses the membrane as a helical span at residues 49 to 66; it reads FFSGLIAGIVSRTLTAPL. Residues 67–106 lie on the Mitochondrial matrix side of the membrane; sequence ERIKILNQVEVILKDGTKYNRIIPAFKVIIKEEGIAGLFR. Residues 107–127 form a helical membrane-spanning segment; the sequence is GNFVNIIKAGPQSAIRFYSYG. Residues 128 to 145 are Mitochondrial intermembrane-facing; the sequence is AFKRMASEPDGSISVINR. A helical transmembrane segment spans residues 146-166; sequence MWAGASSGVVSVALTHPLDVI. Residues 167–192 are Mitochondrial matrix-facing; sequence KTHITVIAPTAATIKNVTKGIYRDLG. A helical transmembrane segment spans residues 193–213; it reads IIGFFRGLSAGILNIAPFAAL. The Mitochondrial intermembrane segment spans residues 214-238; sequence NFTFYETIKEKTQQYILKSPPLYAP. The helical transmembrane segment at 239–259 threads the bilayer; it reads SIYGAISGGLTMTILYPLDVV. The Mitochondrial matrix segment spans residues 260–303; that stretch reads KRRIMLQHFDRNQLPIYKNFIDAIIKITKTEGISALYKGIRPAY. A helical transmembrane segment spans residues 304–324; the sequence is LKVIPTVSINFLIYEGAITLF. At 325-327 the chain is on the mitochondrial intermembrane side; sequence EKK.

It belongs to the mitochondrial carrier (TC 2.A.29) family.

It localises to the mitochondrion inner membrane. In terms of biological role, calcium-dependent mitochondrial solute carrier. Mitochondrial solute carriers shuttle metabolites, nucleotides, and cofactors through the mitochondrial inner membrane. The sequence is that of Mitochondrial substrate carrier family protein A (mcfA) from Dictyostelium discoideum (Social amoeba).